The sequence spans 2188 residues: MGAQVTRQQTGTHENANIATNGSHITYNQINFYKDSYAASASKQDFSQDPSKFTEPVVEGLKAGAPVLKSPSAEACGYSDRVLQLKLGNSAIVTQEAANYCCAYGEWPNYLPDHEAVAIDKPTQPETSTDRFYTLRSVKWESNSTGWWWKLPDALNNIGMFGQNVQYHYLYRSGFLIHVQCNATKFHQGALLVVAIPEHQRGAHDTTTSPGFNDIMKGERGGTFNHPYVLDDGTSIACATIFPHQWINLRTNNSATIVLPWMNVAPMDFPLRHNQWTLAVIPVVPLGTRTMSSVVPITVSIAPMCCEFNGLRHAITQGVPTYLLPGSGQFLTTDDHSSAPVLPCFNPTPEMHIPGQIRNMLEMIQVESMMEINNTDGANGMERLRVDISVQADLDQLLFNIPLDIQLDGPLRNTLVGNISRYYTHWSGSLEMTFMFCGSFMATGKLILCYTPPGGSCPTTRETAMLGTHIVWDFGLQSSITLIIPWISGSHYRMFNSDAKSTNANVGYVTCFMQTNLIVPSESSDTCSLIGFIAAKDDFSLRLMRDSPDIGQSNHLHGAEAAYQVESIIKTATDTVKSEINAELGVVPSLNAVETGATSNTEPEEAIQTRTVINQHGVSETLVENFLGRAALVSKKSFEYKNHASSSAGTHKNFFKWTINTKSFVQLRRKLELFTYLRFDAEITILTTVAVNGNNDSTYMGLPDLTLQAMFVPTGALTPKEQDSFHWQSGSNASVFFKISDPPARMTIPFMCINSAYSVFYDGFAGFEKNGLYGINPADTIGNLCVRIVNEHQPVGFTVTVRVYMKPKHIKAWAPRPPRTMPYMSIANANYKGRDTAPNTLNAIIGNRASVTTMPHNIVTTGPGFGGVFVGSFKIINYHLATIEERQSAIYVDWQSDVLVTPIAAHGRHQIARCKCNTGVYYCRHRDRSYPICFEGPGIQWIEQNEYYPARYQTNVLLAAGPAEAGDCGGLLVCPHGVIGLLTAGGGGIVAFTDIRNLLWLDTDVMEQGITDYIQNLGNAFGAGFTETISNKAKEVQDMLIGESSLLEKLLKALIKIISALVIVIRNSEDLITVTATLALLGCHDSPWSYLKQKVCSYLGIPYVPRQSESWLKKFTEACNALRGLDWLSQKIDKFINWLKTKILPEAREKYEFVQRLKQLPVIEKQVSTIEHSCPTTERQQALFNNVQYYSHYCRKYAPLYAVESKRVAALEKKINNYIQFKSKSRIEPVCLIIHGSPGTGKSVASNLIARAITEKLGGDIYSLPPDPKYFDGYKQQTVVLMDDLMQNPDGNDISMFCQMVSTVDFIPPMASLEEKGTLYTSPFLIATTNAGSIHAPTVSDSKALSRRFKFDVDIEVTDSYKDSNKLDMSRAVEMCKPDNCTPTNYKRCCPLICGKAIQFRDRRTNARSTVDMLVTDIIKEYRTRNSTQDKLEALFQGPPQFKEIKISVAPDTPAPDAINDLLRSVDSQEVRDYCQKKGWIVIHPSNELVVEKHISRAFITLQAIATFVSIAGVVYVIYKLFAGIQGPYTGIPNPKPKVPSLRTAKVQGPGFDFAQAIMKKNTVIARTEKGEFTMLGVYDRVAVIPTHASVGEIIYINDVETRVLDACALRDLTDTNLEITIVKLDRNQKFRDIRHFLPRCEDDYNDAVLSVHTSKFPNMYIPVGQVTNYGFLNLGGTPTHRILMYNFPTRAGQCGGVVTTTGKVIGIHVGGNGAQGFAAMLLHSYFTDTQGEIVSNEKSGMCINAPAKTKLQPSVFHQVFEGSKEPAVLNSKDPRLKTDFEEAIFSKYTGNKIMLMDEYMEEAVDHYVGCLEPLDISVDPIPLENAMYGMEGLEALDLTTSAGFPYLLQGKKKRDIFNRQTRDTSEMTKMLEKYGVDLPFVTFVKDELRSREKVEKGKSRLIEASSLNDSVAMRVAFGNLYATFHNNPGTATGSAVGCDPDIFWSKIPILLDGEIFAFDYTGYDASLSPVWFACLKKVLIKLGYTHQTSFIDYLCHSVHLYKDRKYVINGGMPSGSSGTSIFNTMINNIIIRTLLIKVYKGIDLDQFKMIAYGDDVIASYPHKIDPGLLAEAGKHYGLVMTPADKGTSFIDTNWENVTFLKRYFRADDQYPFLIHPVMPMKEIHESIRWTKDPRNTQDHVRSLCYLAWHNGEEAYNEFCRKIRSVPVGRALTLPAYSSLRRKWLDSF.

Residue glycine 2 is the site of N-myristoyl glycine; by host attachment. Topologically, residues 2–1503 (GAQVTRQQTG…HISRAFITLQ (1502 aa)) are cytoplasmic. Positions 408, 412, 548, 549, 550, 834, 838, and 839 each coordinate N-acetylneuraminate. Catalysis depends on for protease 2A activity residues histidine 879 and aspartate 897. 2 residues coordinate Zn(2+): cysteine 914 and cysteine 916. Cysteine 968 serves as the catalytic For protease 2A activity. 2 residues coordinate Zn(2+): cysteine 974 and histidine 976. Residues 1108-1180 (SESWLKKFTE…EHSCPTTERQ (73 aa)) are membrane-binding. The tract at residues 1108 to 1246 (SESWLKKFTE…SPGTGKSVAS (139 aa)) is oligomerization. The interval 1129 to 1133 (SQKID) is RNA-binding. Residues 1212-1370 (EKKINNYIQF…YKDSNKLDMS (159 aa)) enclose the SF3 helicase domain. Residue 1236 to 1243 (GSPGTGKS) coordinates ATP. Residues cysteine 1376, cysteine 1389, and cysteine 1394 each contribute to the Zn(2+) site. The C4-type; degenerate zinc-finger motif lies at 1376–1394 (CKPDNCTPTNYKRCCPLIC). An RNA-binding region spans residues 1421-1428 (EYRTRNST). The interval 1432 to 1437 (LEALFQ) is oligomerization. An intramembrane segment occupies 1504–1519 (AIATFVSIAGVVYVIY). The Cytoplasmic segment spans residues 1520–2188 (KLFAGIQGPY…SLRRKWLDSF (669 aa)). An O-(5'-phospho-RNA)-tyrosine modification is found at tyrosine 1529. The Peptidase C3 domain maps to 1549-1727 (GPGFDFAQAI…FAAMLLHSYF (179 aa)). Catalysis depends on for protease 3C activity residues histidine 1588, glutamate 1619, and cysteine 1695. The region spanning 1954–2069 (GEIFAFDYTG…SYPHKIDPGL (116 aa)) is the RdRp catalytic domain. Mg(2+)-binding residues include aspartate 1960 and aspartate 2055.

The protein belongs to the picornaviruses polyprotein family. Interacts with capsid protein VP1 and capsid protein VP3 to form heterotrimeric protomers. As to quaternary structure, interacts with capsid protein VP0, and capsid protein VP3 to form heterotrimeric protomers. Five protomers subsequently associate to form pentamers which serve as building blocks for the capsid. Interacts with capsid protein VP2, capsid protein VP3 and capsid protein VP4 following cleavage of capsid protein VP0. In terms of assembly, interacts with capsid protein VP1 and capsid protein VP3 in the mature capsid. Interacts with capsid protein VP0 and capsid protein VP1 to form heterotrimeric protomers. Five protomers subsequently associate to form pentamers which serve as building blocks for the capsid. Interacts with capsid protein VP4 in the mature capsid. Interacts with protein 2C; this interaction may be important for virion morphogenesis. Interacts with host IRF7. As to quaternary structure, interacts with capsid protein VP1 and capsid protein VP3. In terms of assembly, homodimer. Homohexamer; forms a hexameric ring structure with 6-fold symmetry characteristic of AAA+ ATPases. Interacts (via N-terminus) with host RTN3 (via reticulon domain); this interaction is important for viral replication. Interacts with capsid protein VP3; this interaction may be important for virion morphogenesis. As to quaternary structure, interacts with protein 3CD. In terms of assembly, homodimer. Interacts with host GBF1. Interacts (via GOLD domain) with host ACBD3 (via GOLD domain); this interaction allows the formation of a viral protein 3A/ACBD3 heterotetramer with a 2:2 stoichiometry, which will stimulate the recruitment of host PI4KB in order to synthesize PI4P at the viral RNA replication sites. Interacts with RNA-directed RNA polymerase. As to quaternary structure, interacts with host IFIH1/MDA5; this interaction inhibits host IFIH1. In terms of assembly, interacts with protein 3AB and with RNA-directed RNA polymerase. Interacts with Viral protein genome-linked and with protein 3CD. Requires Mg(2+) as cofactor. Specific enzymatic cleavages in vivo by the viral proteases yield processing intermediates and the mature proteins. In terms of processing, myristoylation is required for the formation of pentamers during virus assembly. Further assembly of 12 pentamers and a molecule of genomic RNA generates the provirion. Post-translationally, during virion maturation, immature virions are rendered infectious following cleavage of VP0 into VP4 and VP2. This maturation seems to be an autocatalytic event triggered by the presence of RNA in the capsid and it is followed by a conformational change infectious virion. Myristoylation is required during RNA encapsidation and formation of the mature virus particle. In terms of processing, VPg is uridylylated by the polymerase into VPg-pUpU. This acts as a nucleotide-peptide primer for the genomic RNA replication.

The protein resides in the virion. Its subcellular location is the host cytoplasm. It is found in the host cytoplasmic vesicle membrane. The protein localises to the host nucleus. The enzyme catalyses a ribonucleoside 5'-triphosphate + H2O = a ribonucleoside 5'-diphosphate + phosphate + H(+). It catalyses the reaction Selective cleavage of Tyr-|-Gly bond in the picornavirus polyprotein.. The catalysed reaction is RNA(n) + a ribonucleoside 5'-triphosphate = RNA(n+1) + diphosphate. It carries out the reaction Selective cleavage of Gln-|-Gly bond in the poliovirus polyprotein. In other picornavirus reactions Glu may be substituted for Gln, and Ser or Thr for Gly.. In terms of biological role, component of immature procapsids, which is cleaved into capsid proteins VP4 and VP2 after maturation. Allows the capsid to remain inactive before the maturation step. Forms an icosahedral capsid of pseudo T=3 symmetry with capsid proteins VP2 and VP3. The capsid is 300 Angstroms in diameter, composed of 60 copies of each capsid protein and enclosing the viral positive strand RNA genome. Capsid protein VP1 mainly forms the vertices of the capsid. Capsid protein VP1, together with VP3, interacts with host cell sialic acids to provide virion attachment to target host cells. This attachment induces virion internalization. After binding to its receptor, the capsid undergoes conformational changes. Capsid protein VP1 N-terminus (that contains an amphipathic alpha-helix) and capsid protein VP4 are externalized. Together, they shape a pore in the host membrane through which viral genome is translocated to host cell cytoplasm. Its function is as follows. Forms an icosahedral capsid of pseudo T=3 symmetry with capsid proteins VP2 and VP3. The capsid is 300 Angstroms in diameter, composed of 60 copies of each capsid protein and enclosing the viral positive strand RNA genome. Functionally, forms an icosahedral capsid of pseudo T=3 symmetry with capsid proteins VP2 and VP3. The capsid is 300 Angstroms in diameter, composed of 60 copies of each capsid protein and enclosing the viral positive strand RNA genome. Capsid protein VP3, together with VP1, interacts with host cell sialic acids to provide virion attachment to target host cells. In addition, inhibits the phosphorylation and nuclear translocation of host IRF7 and thereby suppresses downstream interferon production. In terms of biological role, lies on the inner surface of the capsid shell. After binding to the host receptor, the capsid undergoes conformational changes. Capsid protein VP4 is released, Capsid protein VP1 N-terminus is externalized, and together, they shape a pore in the host membrane through which the viral genome is translocated into the host cell cytoplasm. Cysteine protease that cleaves viral polyprotein and specific host proteins. It is responsible for the autocatalytic cleavage between the P1 and P2 regions, which is the first cleavage occurring in the polyprotein. Also cleaves the host translation initiation factor EIF4G1, in order to shut down the capped cellular mRNA translation. Inhibits the host nucleus-cytoplasm protein and RNA trafficking by cleaving host members of the nuclear pores. Counteracts stress granule formation probably by antagonizing its assembly or promoting its dissassembly. Also plays a role in the suppression of host innate immunity through cleavage of host TRAF3, a component of the signaling cascade required to produce type I interferons. Its function is as follows. Plays an essential role in the virus replication cycle by acting as a viroporin. Creates a pore in the host endoplasmic reticulum and as a consequence releases Ca2+ in the cytoplasm of infected cell. In turn, high levels of cytoplasmic calcium may trigger membrane trafficking and transport of viral ER-associated proteins to viroplasms, sites of viral genome replication. Functionally, induces and associates with structural rearrangements of intracellular membranes. Displays RNA-binding, nucleotide binding and NTPase activities. May play a role in virion morphogenesis and viral RNA encapsidation by interacting with the capsid protein VP3. In terms of biological role, localizes the viral replication complex to the surface of membranous vesicles. Together with protein 3CD binds the Cis-Active RNA Element (CRE) which is involved in RNA synthesis initiation. Acts as a cofactor to stimulate the activity of 3D polymerase, maybe through a nucleid acid chaperone activity. Localizes the viral replication complex to the surface of membranous vesicles. It inhibits host cell endoplasmic reticulum-to-Golgi apparatus transport and causes the disassembly of the Golgi complex, possibly through GBF1 interaction. This would result in depletion of MHC, trail receptors and IFN receptors at the host cell surface. Plays an essential role in viral RNA replication by recruiting ACBD3 and PI4KB at the viral replication sites, thereby allowing the formation of the rearranged membranous structures where viral replication takes place. Its function is as follows. Acts as a primer for viral RNA replication and remains covalently bound to viral genomic RNA. VPg is uridylylated prior to priming replication into VPg-pUpU. The oriI viral genomic sequence may act as a template for this. The VPg-pUpU is then used as primer on the genomic RNA poly(A) by the RNA-dependent RNA polymerase to replicate the viral genome. During genome replication, the VPg-RNA linkage is removed by the host TDP2, thereby accelerating replication. During the late stage of the replication cycle, host TDP2 is excluded from sites of viral RNA synthesis and encapsidation, allowing for the generation of progeny virions. Functionally, involved in the viral replication complex and viral polypeptide maturation. It exhibits protease activity with a specificity and catalytic efficiency that is different from protease 3C. Protein 3CD lacks polymerase activity. Protein 3CD binds to the 5'UTR of the viral genome. In terms of biological role, major viral protease that mediates proteolytic processing of the polyprotein. Cleaves host EIF5B, contributing to host translation shutoff. Also cleaves host PABPC1, contributing to host translation shutoff. Binds and inhibits host IFIH1/MDA5, thereby inhibiting the type-I IFN production and the establishment of the antiviral state. Cleaves host MAP3K7/TAK1, resulting in inhibition of TRAF6-triggered NF-kappa-B induction. Cleaves host TICAM1; this interaction allows the virus to disrupt host TLR3 signaling. Cleaves host IRF7, resulting in inhibition of type-I IFN production. Cleaves host NLRP1, triggers host N-glycine-mediated degradation of the autoinhibitory NLRP1 N-terminal fragment. Replicates the viral genomic RNA on the surface of intracellular membranes. May form linear arrays of subunits that propagate along a strong head-to-tail interaction called interface-I. Covalently attaches UMP to a tyrosine of VPg, which is used to prime RNA synthesis. The positive stranded RNA genome is first replicated at virus induced membranous vesicles, creating a dsRNA genomic replication form. This dsRNA is then used as template to synthesize positive stranded RNA genomes. ss(+)RNA genomes are either translated, replicated or encapsidated. The sequence is that of Genome polyprotein from Human enterovirus D68 (EV68).